Here is a 223-residue protein sequence, read N- to C-terminus: Killer cell lectin-like receptor subfamily B member 1B allele B (223 aa).

At 1 to 45 the chain is on the cytoplasmic side; the sequence is MDTAVVYADLHLARTGEPKHKSPPSLSPDTCQCPRWHRLALKLGC. The ITIM motif motif lies at 5–10; it reads VVYADL. The short motif at 31–34 is the LCK-binding motif element; the sequence is CQCP. Residues 46–66 form a helical; Signal-anchor for type II membrane protein membrane-spanning segment; the sequence is ACLILLVLSVIGLGVLVLTLL. The Extracellular portion of the chain corresponds to 67 to 223; it reads QKPLIQNSPA…LKCECMCNGS (157 aa). Residues 101 to 211 form the C-type lectin domain; it reads HQDKCFHVSQ…CDSDNLWICQ (111 aa). 2 disulfide bridges follow: Cys-122-Cys-210 and Cys-189-Cys-202.

In terms of assembly, homodimer; disulfide-linked. Interacts with tyrosine kinase LCK. Binds PTPN6/SHP-1 in a phosphorylation-dependent manner. Expressed in a subset of natural killer cells.

The protein localises to the membrane. Its function is as follows. Receptor for CLEC2D/OCIL. Ligand-binding contributes to inhibition of cytotoxic natural killer (NK) cells. May mediate MHC class I-independent 'missing-self' recognition of allografts, tumor cells and virus-infected cells. The sequence is that of Killer cell lectin-like receptor subfamily B member 1B allele B from Rattus norvegicus (Rat).